The following is a 145-amino-acid chain: Large ribosomal subunit protein uL15 (145 aa).

2 stretches are compositionally biased toward basic residues: residues 1–13 (MIRK…KQRG) and 22–33 (TKKRRGAGHRGG). Residues 1–41 (MIRKTKKIRKQRGSRSVGGGCTKKRRGAGHRGGRGQAGGNK) form a disordered region.

This sequence belongs to the universal ribosomal protein uL15 family. As to quaternary structure, part of the 50S ribosomal subunit.

Its function is as follows. Binds to the 23S rRNA. The chain is Large ribosomal subunit protein uL15 from Methanosphaera stadtmanae (strain ATCC 43021 / DSM 3091 / JCM 11832 / MCB-3).